We begin with the raw amino-acid sequence, 61 residues long: MKENEVKDEKSVDVLSFKQLESQKTVLPQDVFRNELTWFCYEIYKSLAFRIWMLLWLPLSI.

The protein belongs to the DUP/COS family.

This is an uncharacterized protein from Saccharomyces cerevisiae (strain ATCC 204508 / S288c) (Baker's yeast).